Consider the following 170-residue polypeptide: Small ribosomal subunit protein uS5 (170 aa).

Positions 13-76 constitute an S5 DRBM domain; it reads LLEKLVGVRR…ENARKNMISV (64 aa).

This sequence belongs to the universal ribosomal protein uS5 family. As to quaternary structure, part of the 30S ribosomal subunit. Contacts proteins S4 and S8.

Its function is as follows. With S4 and S12 plays an important role in translational accuracy. Located at the back of the 30S subunit body where it stabilizes the conformation of the head with respect to the body. This Nitrosococcus oceani (strain ATCC 19707 / BCRC 17464 / JCM 30415 / NCIMB 11848 / C-107) protein is Small ribosomal subunit protein uS5.